We begin with the raw amino-acid sequence, 369 residues long: 4-hydroxy-3-methylbut-2-en-1-yl diphosphate synthase (flavodoxin) (369 aa).

C270, C273, C305, and E312 together coordinate [4Fe-4S] cluster.

It belongs to the IspG family. Requires [4Fe-4S] cluster as cofactor.

It carries out the reaction (2E)-4-hydroxy-3-methylbut-2-enyl diphosphate + oxidized [flavodoxin] + H2O + 2 H(+) = 2-C-methyl-D-erythritol 2,4-cyclic diphosphate + reduced [flavodoxin]. The protein operates within isoprenoid biosynthesis; isopentenyl diphosphate biosynthesis via DXP pathway; isopentenyl diphosphate from 1-deoxy-D-xylulose 5-phosphate: step 5/6. In terms of biological role, converts 2C-methyl-D-erythritol 2,4-cyclodiphosphate (ME-2,4cPP) into 1-hydroxy-2-methyl-2-(E)-butenyl 4-diphosphate. This is 4-hydroxy-3-methylbut-2-en-1-yl diphosphate synthase (flavodoxin) from Pseudomonas fluorescens (strain ATCC BAA-477 / NRRL B-23932 / Pf-5).